The chain runs to 142 residues: 3-hydroxyacyl-[acyl-carrier-protein] dehydratase FabZ (142 aa).

The active site involves His-47.

Belongs to the thioester dehydratase family. FabZ subfamily.

It is found in the cytoplasm. The catalysed reaction is a (3R)-hydroxyacyl-[ACP] = a (2E)-enoyl-[ACP] + H2O. Its function is as follows. Involved in unsaturated fatty acids biosynthesis. Catalyzes the dehydration of short chain beta-hydroxyacyl-ACPs and long chain saturated and unsaturated beta-hydroxyacyl-ACPs. This is 3-hydroxyacyl-[acyl-carrier-protein] dehydratase FabZ from Coxiella burnetii (strain RSA 331 / Henzerling II).